The sequence spans 548 residues: Tryprostatin B 6-hydroxylase (548 aa).

A run of 3 helical transmembrane segments spans residues 5–25 (MKCG…LWYF), 35–54 (WRYV…LLYA), and 73–93 (LLMV…RTLF). Cys491 contacts heme.

This sequence belongs to the cytochrome P450 family. Requires heme as cofactor.

The protein localises to the membrane. The enzyme catalyses tryprostatin B + reduced [NADPH--hemoprotein reductase] + O2 = 6-hydroxytryprostatin B + oxidized [NADPH--hemoprotein reductase] + H2O + H(+). The protein operates within mycotoxin biosynthesis. In terms of biological role, cytochrome P450 monooxygenase; part of the gene cluster that mediates the biosynthesis of fumitremorgins, indole alkaloids that carry not only intriguing chemical structures, but also interesting biological and pharmacological activities. The biosynthesis of fumitremorgin-type alkaloids begins by condensation of the two amino acids L-tryptophan and L-proline to brevianamide F, catalyzed by the non-ribosomal peptide synthetase ftmPS/ftmA. Brevianamide F is then prenylated by the prenyltransferase ftmPT1/ftmB in the presence of dimethylallyl diphosphate, resulting in the formation of tryprostatin B. The three cytochrome P450 monooxygenases, ftmP450-1/ftmC, ftmP450-2/ftmE and ftmP450-3/FtmG, are responsible for the conversion of tryprostatin B to 6-hydroxytryprostatin B, tryprostatin A to fumitremorgin C and fumitremorgin C to 12,13-dihydroxyfumitremorgin C, respectively. The putative methyltransferase ftmMT/ftmD is expected for the conversion of 6-hydroxytryprostatin B to tryprostatin A. FtmPT2/FtmH catalyzes the prenylation of 12,13-dihydroxyfumitre-morgin C in the presence of dimethylallyl diphosphate, resulting in the formation of fumitremorgin B. Fumitremorgin B is further converted to verruculogen by ftmOx1/ftmF via the insertion of an endoperoxide bond between the two prenyl moieties. Finally, verruculogen is further converted to fumitremorgin A by the verruculogen prenyltransferase ftmPT3. This Neosartorya fischeri (strain ATCC 1020 / DSM 3700 / CBS 544.65 / FGSC A1164 / JCM 1740 / NRRL 181 / WB 181) (Aspergillus fischerianus) protein is Tryprostatin B 6-hydroxylase.